Reading from the N-terminus, the 267-residue chain is RWD domain-containing protein 3 (267 aa).

Residues Gln7–Ile114 form the RWD domain. 2 interaction with UBE2I/UBC9 regions span residues Ala13–Ile15 and Val100–Glu102.

As to quaternary structure, interacts with UBE2I/UBC9, NFKBIA, HIF1A and NCOA2.

It is found in the nucleus. It localises to the cytoplasm. Its function is as follows. Enhancer of SUMO conjugation. Via its interaction with UBE2I/UBC9, increases SUMO conjugation to proteins by promoting the binding of E1 and E2 enzymes, thioester linkage between SUMO and UBE2I/UBC9 and transfer of SUMO to specific target proteins which include HIF1A, PIAS, NFKBIA, NR3C1 and TOP1. Positively regulates the NF-kappa-B signaling pathway by enhancing the sumoylation of NF-kappa-B inhibitor alpha (NFKBIA), promoting its stabilization which consequently leads to an increased inhibition of NF-kappa-B transcriptional activity. Negatively regulates the hypoxia-inducible factor-1 alpha (HIF1A) signaling pathway by increasing the sumoylation of HIF1A, promoting its stabilization, transcriptional activity and the expression of its target gene VEGFA during hypoxia. Has no effect on ubiquitination. The chain is RWD domain-containing protein 3 (Rwdd3) from Rattus norvegicus (Rat).